A 221-amino-acid chain; its full sequence is Large ribosomal subunit protein uL4 (221 aa).

Residues 45 to 100 (ARQGTHKTKNRGEVSGAGRKPFKQKGTGRARQGSIRAPQMTGGGIVHGPTPRDYSQ) are disordered.

The protein belongs to the universal ribosomal protein uL4 family. Part of the 50S ribosomal subunit.

One of the primary rRNA binding proteins, this protein initially binds near the 5'-end of the 23S rRNA. It is important during the early stages of 50S assembly. It makes multiple contacts with different domains of the 23S rRNA in the assembled 50S subunit and ribosome. Its function is as follows. Forms part of the polypeptide exit tunnel. This chain is Large ribosomal subunit protein uL4, found in Leifsonia xyli subsp. xyli (strain CTCB07).